Reading from the N-terminus, the 347-residue chain is Histone deacetylase 11 (347 aa).

The tract at residues 14 to 318 is histone deacetylase; it reads TRWPIVYSPR…ARIIADSILN (305 aa). The active site involves His-143.

The protein belongs to the histone deacetylase family. As to quaternary structure, interacts with HDAC6.

The protein resides in the nucleus. It carries out the reaction N(6)-acetyl-L-lysyl-[histone] + H2O = L-lysyl-[histone] + acetate. Functionally, responsible for the deacetylation of lysine residues on the N-terminal part of the core histones (H2A, H2B, H3 and H4). Histone deacetylation gives a tag for epigenetic repression and plays an important role in transcriptional regulation, cell cycle progression and developmental events. Histone deacetylases act via the formation of large multiprotein complexes. In Macaca fascicularis (Crab-eating macaque), this protein is Histone deacetylase 11 (HDAC11).